Consider the following 627-residue polypeptide: Transketolase-like protein 2 (627 aa).

H39 contributes to the substrate binding site. Thiamine diphosphate-binding positions include S42, H79, and 125–127 (GSL). Mg(2+) is bound at residue D157. The thiamine diphosphate site is built by G158 and N187. Positions 187 and 189 each coordinate Mg(2+). Residues K249 and H263 each contribute to the thiamine diphosphate site. Substrate is bound by residues H263, R323, and S350. Thiamine diphosphate-binding residues include E371 and F397. The active-site Proton donor is the E371. Residues H421 and D429 each coordinate substrate. Q433 is a thiamine diphosphate binding site. R479 provides a ligand contact to substrate.

Belongs to the transketolase family. In terms of assembly, homodimer. Mg(2+) serves as cofactor. Requires Ca(2+) as cofactor. Mn(2+) is required as a cofactor. The cofactor is Co(2+). It depends on thiamine diphosphate as a cofactor.

It carries out the reaction D-sedoheptulose 7-phosphate + D-glyceraldehyde 3-phosphate = aldehydo-D-ribose 5-phosphate + D-xylulose 5-phosphate. Functionally, plays an essential role in total transketolase activity and cell proliferation in cancer cells; after transfection with anti-TKTL1 siRNA, total transketolase activity dramatically decreases and proliferation was significantly inhibited in cancer cells. Plays a pivotal role in carcinogenesis. The polypeptide is Transketolase-like protein 2 (Tktl2) (Mus musculus (Mouse)).